Here is a 226-residue protein sequence, read N- to C-terminus: PKHD-type hydroxylase Pfl01_0799 (226 aa).

The 101-residue stretch at 78-178 folds into the Fe2OG dioxygenase domain; that stretch reads KVFPPLLNCY…RYASFFWTQS (101 aa). Residues H96, D98, and H159 each coordinate Fe cation. R169 serves as a coordination point for 2-oxoglutarate.

Fe(2+) serves as cofactor. It depends on L-ascorbate as a cofactor.

The protein is PKHD-type hydroxylase Pfl01_0799 of Pseudomonas fluorescens (strain Pf0-1).